The primary structure comprises 181 residues: Oligoribonuclease (181 aa).

An Exonuclease domain is found at 8 to 171 (LIWVDLEMTG…EDIKESIAEM (164 aa)). Residue Y129 is part of the active site.

The protein belongs to the oligoribonuclease family.

The protein resides in the cytoplasm. Its function is as follows. 3'-to-5' exoribonuclease specific for small oligoribonucleotides. This Shewanella frigidimarina (strain NCIMB 400) protein is Oligoribonuclease.